A 533-amino-acid chain; its full sequence is MTTFRELGLSDSLLQSVESMGFEEATPIQAETIPHALQGKDIIGQAQTGTGKTAAFGLPLLDKVDTHKESVQGIVIAPTRELAIQVGEELYKIGKHKRVRILPIYGGQDINRQIRALKKHPHIIVGTPGRILDHINRKTLRLQNVETVVLDEADEMLNMGFIEDIEAILTDVPETHQTLLFSATMPDPIRRIAERFMTEPQHIKVKAKEVTMPNIQQFYLEVQEKKKFDVLTRLLDIQSPELAIVFGRTKRRVDELSEALNLRGYAAEGIHGDLTQAKRMSVLRKFKEGSIEVLVATDVAARGLDISGVTHVYNFDIPQDPESYVHRIGRTGRAGKKGIAMLFVTPRESGQLKNIERTTKRKMDRMDAPTLDEALEGQQRLIAEKLQSTIENENLAYYKRIAEEMLEENDSVTVVAAALKMMTKEPDTTPIALTSEPPVVSRGGGSKKRGGNGGGYRDGNRNRSRDGRGGGDGRNRDRNRDGRNRDGNRDRNRDGNRDRNRDGGSRGRRGEGQGRPGSSNGRGERKHHSRPQA.

Positions 2–30 match the Q motif motif; that stretch reads TTFRELGLSDSLLQSVESMGFEEATPIQA. The Helicase ATP-binding domain occupies 33 to 203; the sequence is IPHALQGKDI…ERFMTEPQHI (171 aa). Position 46-53 (46-53) interacts with ATP; that stretch reads AQTGTGKT. Positions 151–154 match the DEAD box motif; the sequence is DEAD. Positions 214 to 374 constitute a Helicase C-terminal domain; sequence NIQQFYLEVQ…RMDAPTLDEA (161 aa). Residues 428–533 are disordered; it reads TTPIALTSEP…ERKHHSRPQA (106 aa). Over residues 458-512 the composition is skewed to basic and acidic residues; it reads DGNRNRSRDGRGGGDGRNRDRNRDGRNRDGNRDRNRDGNRDRNRDGGSRGRRGEG. The segment covering 524 to 533 has biased composition (basic residues); the sequence is ERKHHSRPQA.

It belongs to the DEAD box helicase family. CshA subfamily. In terms of assembly, oligomerizes, may be a member of the RNA degradosome.

The protein resides in the cytoplasm. The enzyme catalyses ATP + H2O = ADP + phosphate + H(+). DEAD-box RNA helicase possibly involved in RNA degradation. May work in conjunction with the cold shock proteins to ensure proper initiation of transcription at low and optimal temperatures. Unwinds dsRNA in both 5'- and 3'-directions and shows RNA-dependent ATPase activity. Probably has a somewhat redundant function with cshB, as cshA can partially complement the growth effects of a cshB deletion. Plays a role in adaptation to cold, oxididant and pH stress. This is DEAD-box ATP-dependent RNA helicase CshA from Bacillus cereus (strain ATCC 14579 / DSM 31 / CCUG 7414 / JCM 2152 / NBRC 15305 / NCIMB 9373 / NCTC 2599 / NRRL B-3711).